The primary structure comprises 762 residues: Homeobox-leucine zipper protein MERISTEM L1 (762 aa).

Positions 13–72 (MFDMTPKNSENDLGITGSHEEDFETKSGAEVTMENPLEEELQDPNQRPNKKKRYHRHTQR) are disordered. Residues 30-39 (SHEEDFETKS) are compositionally biased toward basic and acidic residues. Over residues 60–71 (PNKKKRYHRHTQ) the composition is skewed to basic residues. The segment at residues 62–121 (KKKRYHRHTQRQIQELESFFKECPHPDDKQRKELSRELSLEPLQVKFWFQNKRTQMKAQH) is a DNA-binding region (homeobox). Positions 110-192 (FQNKRTQMKA…DRISAIAAKY (83 aa)) form a coiled coil. Residues 253–484 (SEADKPMIVE…LDRQCERLAS (232 aa)) enclose the START domain.

Belongs to the HD-ZIP homeobox family. Class IV subfamily. In terms of assembly, interacts with GAI/RGA2, RGA/RGA1/GRS, RGL2/SCL19 and PDF2. Interacts with AIL7/PLT7, ANT, BBM and AIL1.

The protein resides in the nucleus. Its function is as follows. Probable transcription factor involved in cell specification and pattern formation during embryogenesis. Binds to the L1 box DNA sequence 5'-TAAATG[CT]A-3'. Plays a role in maintaining the identity of L1 cells, possibly by interacting with their L1 box or other target-gene promoters; binds to the LIP1 gene promoter and stimulates its expression upon imbibition. Acts as a positive regulator of gibberellins (GAs)-regulated epidermal gene expression (e.g. LIP1, LIP2, LTP1, FDH and PDF1). Functionally redundant to PDF2. Seems to promote cell differentiation. The chain is Homeobox-leucine zipper protein MERISTEM L1 from Arabidopsis thaliana (Mouse-ear cress).